The following is a 157-amino-acid chain: Protein Smg (157 aa).

The protein belongs to the Smg family.

The polypeptide is Protein Smg (Buchnera aphidicola subsp. Schizaphis graminum (strain Sg)).